The primary structure comprises 126 residues: Holo-[acyl-carrier-protein] synthase (126 aa).

Mg(2+) contacts are provided by aspartate 9 and glutamate 58.

This sequence belongs to the P-Pant transferase superfamily. AcpS family. Mg(2+) serves as cofactor.

The protein localises to the cytoplasm. It catalyses the reaction apo-[ACP] + CoA = holo-[ACP] + adenosine 3',5'-bisphosphate + H(+). In terms of biological role, transfers the 4'-phosphopantetheine moiety from coenzyme A to a Ser of acyl-carrier-protein. In Vibrio campbellii (strain ATCC BAA-1116), this protein is Holo-[acyl-carrier-protein] synthase.